Consider the following 224-residue polypeptide: MKFGVVVFPGSNCDRDVAYVTRDLLGQPTRMVWHQDTDIADLDVVIIPGGFSYGDYLRCGAIARFSPVMQQVVEHAQKGKLVLGICNGFQVLTEAGLLPGALARNQDLHFICDRVPLTVESTNSLWTQAYNPGEVITLPIAHGEGRFYADEATLSEIEDNGQVLFRYAGENPNGSLNNIAGICDRQGNVLGMMPHPERASDPVLGGSDGLKLFQGLLEKVVALA.

A Glutamine amidotransferase type-1 domain is found at 3-224 (FGVVVFPGSN…GLLEKVVALA (222 aa)). The Nucleophile role is filled by Cys86. Active-site residues include His195 and Glu197.

In terms of assembly, part of the FGAM synthase complex composed of 1 PurL, 1 PurQ and 2 PurS subunits.

It localises to the cytoplasm. It catalyses the reaction N(2)-formyl-N(1)-(5-phospho-beta-D-ribosyl)glycinamide + L-glutamine + ATP + H2O = 2-formamido-N(1)-(5-O-phospho-beta-D-ribosyl)acetamidine + L-glutamate + ADP + phosphate + H(+). The catalysed reaction is L-glutamine + H2O = L-glutamate + NH4(+). It participates in purine metabolism; IMP biosynthesis via de novo pathway; 5-amino-1-(5-phospho-D-ribosyl)imidazole from N(2)-formyl-N(1)-(5-phospho-D-ribosyl)glycinamide: step 1/2. Part of the phosphoribosylformylglycinamidine synthase complex involved in the purines biosynthetic pathway. Catalyzes the ATP-dependent conversion of formylglycinamide ribonucleotide (FGAR) and glutamine to yield formylglycinamidine ribonucleotide (FGAM) and glutamate. The FGAM synthase complex is composed of three subunits. PurQ produces an ammonia molecule by converting glutamine to glutamate. PurL transfers the ammonia molecule to FGAR to form FGAM in an ATP-dependent manner. PurS interacts with PurQ and PurL and is thought to assist in the transfer of the ammonia molecule from PurQ to PurL. The chain is Phosphoribosylformylglycinamidine synthase subunit PurQ from Nostoc sp. (strain PCC 7120 / SAG 25.82 / UTEX 2576).